The primary structure comprises 59 residues: Crassipeptide cce9a (59 aa).

A propeptide spanning residues 1 to 30 (ADNHARVAGPRAVASGRYATEKAFLQMMTR) is cleaved from the precursor.

Post-translationally, contains 3 disulfide bonds. In terms of tissue distribution, expressed by the venom duct.

Its subcellular location is the secreted. In terms of biological role, crassispirid snail peptide that induces sleep-like symptoms in young mice (12 and 14 days) and hyperactivity in older mice (16 days), when intracranially injected. This chain is Crassipeptide cce9a, found in Crassispira cerithina (Sea snail).